Reading from the N-terminus, the 518-residue chain is ORC1-type DNA replication protein 7 (518 aa).

ATP is bound at residue 94–98 (TGKTA). The interval 165-196 (DDDPNALEIGGSPGDDRTGNESSEGSDVSDSF) is disordered. Over residues 186-196 (SSEGSDVSDSF) the composition is skewed to low complexity. Residues Tyr318 and Arg330 each coordinate ATP.

This sequence belongs to the CDC6/cdc18 family.

In terms of biological role, involved in regulation of DNA replication. Required to initiate DNA replication of the circular chromosome at a nearby autonomously replicating sequence (ARS) oriC1. The chain is ORC1-type DNA replication protein 7 (orc7) from Halobacterium salinarum (strain ATCC 700922 / JCM 11081 / NRC-1) (Halobacterium halobium).